The chain runs to 582 residues: Heat shock protein 60, mitochondrial (582 aa).

Residues Met1–Lys35 constitute a mitochondrion transit peptide. Phosphoserine occurs at positions 77 and 92. Residues Glu561–Met582 are disordered. Gly residues predominate over residues Pro570 to Met582.

It belongs to the chaperonin (HSP60) family.

It is found in the mitochondrion. May participate in assembly and/or disassembly of proteins imported into the mitochondrion. HSP60 are ATPases and have affinity for unfolded proteins. The chain is Heat shock protein 60, mitochondrial (hsp60) from Schizosaccharomyces pombe (strain 972 / ATCC 24843) (Fission yeast).